An 88-amino-acid chain; its full sequence is Protein U62 (88 aa).

This chain is Protein U62, found in Elephantid herpesvirus 1 (isolate Asian elephant/Berlin/Kiba/1998) (EIHV-1).